We begin with the raw amino-acid sequence, 195 residues long: Proteasome subunit beta 1 (195 aa).

The propeptide at 1 to 6 (MEELPA) is removed in mature form; by autocatalysis. The active-site Nucleophile is threonine 7.

Belongs to the peptidase T1B family. The 20S proteasome core is composed of 14 alpha and 14 beta subunits that assemble into four stacked heptameric rings, resulting in a barrel-shaped structure. The two inner rings, each composed of seven catalytic beta subunits, are sandwiched by two outer rings, each composed of seven alpha subunits. The catalytic chamber with the active sites is on the inside of the barrel. Has a gated structure, the ends of the cylinder being occluded by the N-termini of the alpha-subunits. Is capped at one or both ends by the proteasome regulatory ATPase, PAN.

It localises to the cytoplasm. The enzyme catalyses Cleavage of peptide bonds with very broad specificity.. The formation of the proteasomal ATPase PAN-20S proteasome complex, via the docking of the C-termini of PAN into the intersubunit pockets in the alpha-rings, triggers opening of the gate for substrate entry. Interconversion between the open-gate and close-gate conformations leads to a dynamic regulation of the 20S proteasome proteolysis activity. Its function is as follows. Component of the proteasome core, a large protease complex with broad specificity involved in protein degradation. The protein is Proteasome subunit beta 1 of Sulfolobus acidocaldarius (strain ATCC 33909 / DSM 639 / JCM 8929 / NBRC 15157 / NCIMB 11770).